Reading from the N-terminus, the 261-residue chain is Oxidoreductase ptaF (261 aa).

Belongs to the avfA family.

It functions in the pathway secondary metabolite biosynthesis. Its function is as follows. Oxidoreductase; part of the gene cluster that mediates the biosynthesis of pestheic acid, a diphenyl ether which is a biosynthetic precursor of the unique chloropupukeananes. The biosynthesis initiates from condensation of acetate and malonate units catalyzed by the non-reducing PKS ptaA. As the ptaA protein is TE/CLC domain-deficient, hydrolysis and Claisen cyclization of the polyketide could be catalyzed by ptaB containing a beta-lactamase domain. The ptaB protein might hydrolyze the thioester bond between the ACP of ptaA and the intermediate to release atrochrysone carboxylic acid, which is spontaneously dehydrated to form endocrocin anthrone. Endocrocin anthrone is then converted to endocrocin, catalyzed by the anthrone oxygenase ptaC. Spontaneous decarboxylation of endocrocin occurs to generate emodin. An O-methyltransferase (ptaH or ptaI) could methylate emodin to form physcion. PtaJ could then catalyze the oxidative cleavage of physcion, and rotation of the intermediate could then afford desmethylisosulochrin. PtaF, a putative NADH-dependent oxidoreductase, might also participate in the oxidative cleavage step. Desmethylisosulochrin is then transformed by another O-methyltransferase (ptaH or ptaI) to form isosulochrin. Chlorination of isosulochrin by ptaM in the cyclohexadienone B ring then produces chloroisosulochrin. PtaE is responsible for the oxidative coupling reactions of both benzophenones isosulouchrin and chloroisosulochrin to RES-1214-1 and pestheic acid respectively, regardless of chlorination. The chain is Oxidoreductase ptaF from Pestalotiopsis fici (strain W106-1 / CGMCC3.15140).